Consider the following 374-residue polypeptide: Alcohol dehydrogenase class-3 (374 aa).

N-acetylalanine is present on alanine 2. Cysteine 45, histidine 67, cysteine 97, cysteine 100, cysteine 103, cysteine 111, and cysteine 174 together coordinate Zn(2+). Lysine 233 carries the N6-succinyllysine modification. Residue serine 247 is modified to Phosphoserine. Position 315 is an N6-succinyllysine (lysine 315). Phosphoserine is present on residues serine 324 and serine 351.

Belongs to the zinc-containing alcohol dehydrogenase family. Class-III subfamily. In terms of assembly, homodimer. It depends on Zn(2+) as a cofactor.

The protein localises to the cytoplasm. The catalysed reaction is a primary alcohol + NAD(+) = an aldehyde + NADH + H(+). It carries out the reaction a secondary alcohol + NAD(+) = a ketone + NADH + H(+). It catalyses the reaction S-(hydroxymethyl)glutathione + NADP(+) = S-formylglutathione + NADPH + H(+). The enzyme catalyses S-(hydroxymethyl)glutathione + NAD(+) = S-formylglutathione + NADH + H(+). The catalysed reaction is 20-oxo-(5Z,8Z,11Z,14Z)-eicosatetraenoate + NAD(+) + H2O = (5Z,8Z,11Z,14Z)-eicosatetraenedioate + NADH + 2 H(+). It carries out the reaction 20-hydroxy-(5Z,8Z,11Z,14Z)-eicosatetraenoate + NAD(+) = 20-oxo-(5Z,8Z,11Z,14Z)-eicosatetraenoate + NADH + H(+). It catalyses the reaction S-nitrosoglutathione + NADH + H(+) = S-(hydroxysulfenamide)glutathione + NAD(+). In terms of biological role, catalyzes the oxidation of long-chain primary alcohols and the oxidation of S-(hydroxymethyl) glutathione. Also oxidizes long chain omega-hydroxy fatty acids, such as 20-HETE, producing both the intermediate aldehyde, 20-oxoarachidonate and the end product, a dicarboxylic acid, (5Z,8Z,11Z,14Z)-eicosatetraenedioate. Class-III ADH is remarkably ineffective in oxidizing ethanol. Required for clearance of cellular formaldehyde, a cytotoxic and carcinogenic metabolite that induces DNA damage. Also acts as a S-nitroso-glutathione reductase by catalyzing the NADH-dependent reduction of S-nitrosoglutathione, thereby regulating protein S-nitrosylation. The protein is Alcohol dehydrogenase class-3 of Oryctolagus cuniculus (Rabbit).